A 111-amino-acid polypeptide reads, in one-letter code: Large ribosomal subunit protein uL22 (111 aa).

Belongs to the universal ribosomal protein uL22 family. In terms of assembly, part of the 50S ribosomal subunit.

In terms of biological role, this protein binds specifically to 23S rRNA; its binding is stimulated by other ribosomal proteins, e.g. L4, L17, and L20. It is important during the early stages of 50S assembly. It makes multiple contacts with different domains of the 23S rRNA in the assembled 50S subunit and ribosome. Its function is as follows. The globular domain of the protein is located near the polypeptide exit tunnel on the outside of the subunit, while an extended beta-hairpin is found that lines the wall of the exit tunnel in the center of the 70S ribosome. In Alkalilimnicola ehrlichii (strain ATCC BAA-1101 / DSM 17681 / MLHE-1), this protein is Large ribosomal subunit protein uL22.